Consider the following 141-residue polypeptide: Nucleoside diphosphate kinase (141 aa).

Residues K11, F59, R87, T93, R104, and N114 each contribute to the ATP site. H117 (pros-phosphohistidine intermediate) is an active-site residue.

The protein belongs to the NDK family. Homotetramer. Requires Mg(2+) as cofactor.

It is found in the cytoplasm. The enzyme catalyses a 2'-deoxyribonucleoside 5'-diphosphate + ATP = a 2'-deoxyribonucleoside 5'-triphosphate + ADP. It catalyses the reaction a ribonucleoside 5'-diphosphate + ATP = a ribonucleoside 5'-triphosphate + ADP. Major role in the synthesis of nucleoside triphosphates other than ATP. The ATP gamma phosphate is transferred to the NDP beta phosphate via a ping-pong mechanism, using a phosphorylated active-site intermediate. This chain is Nucleoside diphosphate kinase, found in Bordetella avium (strain 197N).